Consider the following 123-residue polypeptide: uncharacterized protein (123 aa).

The helical transmembrane segment at 5-25 threads the bilayer; the sequence is GTLVIIFAIVLILCIMLLFFY. Residues 33-54 are disordered; sequence PGVLPPPIPPPTPPPPKKKYDH. The segment covering 35–47 has biased composition (pro residues); the sequence is VLPPPIPPPTPPP.

Belongs to the asfivirus CP123L family.

Its subcellular location is the host membrane. The protein localises to the virion. This is an uncharacterized protein from African swine fever virus (isolate Warthog/Namibia/Wart80/1980) (ASFV).